The chain runs to 225 residues: Uracil-DNA glycosylase (225 aa).

Aspartate 64 functions as the Proton acceptor in the catalytic mechanism.

It belongs to the uracil-DNA glycosylase (UDG) superfamily. UNG family.

It is found in the cytoplasm. It catalyses the reaction Hydrolyzes single-stranded DNA or mismatched double-stranded DNA and polynucleotides, releasing free uracil.. Its function is as follows. Excises uracil residues from the DNA which can arise as a result of misincorporation of dUMP residues by DNA polymerase or due to deamination of cytosine. The chain is Uracil-DNA glycosylase from Agathobacter rectalis (strain ATCC 33656 / DSM 3377 / JCM 17463 / KCTC 5835 / VPI 0990) (Eubacterium rectale).